The primary structure comprises 86 residues: Large ribosomal subunit protein bL31 (86 aa).

The tract at residues 65–86 is disordered; sequence YGMGSADSATSKETKESKKSDK. A compositionally biased stretch (basic and acidic residues) spans 74–86; that stretch reads TSKETKESKKSDK.

The protein belongs to the bacterial ribosomal protein bL31 family. Type A subfamily. As to quaternary structure, part of the 50S ribosomal subunit.

Its function is as follows. Binds the 23S rRNA. In Prochlorococcus marinus subsp. pastoris (strain CCMP1986 / NIES-2087 / MED4), this protein is Large ribosomal subunit protein bL31.